The chain runs to 152 residues: Large ribosomal subunit protein bL9 (152 aa).

Belongs to the bacterial ribosomal protein bL9 family.

Functionally, binds to the 23S rRNA. This chain is Large ribosomal subunit protein bL9, found in Pelagibacter ubique (strain HTCC1062).